The primary structure comprises 866 residues: Transcription factor E2F8 (866 aa).

Ser-71 and Ser-102 each carry phosphoserine. 2 DNA-binding regions span residues 113 to 182 and 261 to 347; these read RKEK…TWHG and RKDK…KWTG. 3 disordered regions span residues 409-429, 532-632, and 794-837; these read RKIN…STQN, TITP…STTL, and TNGQ…GSPC. Phosphoserine occurs at positions 413 and 417. The span at 543–552 shows a compositional bias: polar residues; sequence VCPTTSSNAM. Composition is skewed to basic and acidic residues over residues 588 to 603 and 612 to 624; these read QGAK…EKGS and SGSK…DQKA. The span at 794 to 805 shows a compositional bias: polar residues; sequence TNGQSFAGTGAQ. The span at 825-834 shows a compositional bias: low complexity; sequence TPGGPTKPTG.

It belongs to the E2F/DP family. Homodimer and heterodimer: mainly forms homodimers and, to a lesser extent, heterodimers with E2F8. Dimerization is important for DNA-binding. Interacts with HIF1A.

The protein resides in the nucleus. Functionally, atypical E2F transcription factor that participates in various processes such as angiogenesis and polyploidization of specialized cells. Mainly acts as a transcription repressor that binds DNA independently of DP proteins and specifically recognizes the E2 recognition site 5'-TTTC[CG]CGC-3'. Directly represses transcription of classical E2F transcription factors such as E2F1: component of a feedback loop in S phase by repressing the expression of E2F1, thereby preventing p53/TP53-dependent apoptosis. Plays a key role in polyploidization of cells in placenta and liver by regulating the endocycle, probably by repressing genes promoting cytokinesis and antagonizing action of classical E2F proteins (E2F1, E2F2 and/or E2F3). Required for placental development by promoting polyploidization of trophoblast giant cells. Acts as a promoter of sprouting angiogenesis, possibly by acting as a transcription activator: associates with HIF1A, recognizes and binds the VEGFA promoter, which is different from canonical E2 recognition site, and activates expression of the VEGFA gene. This chain is Transcription factor E2F8 (E2F8), found in Bos taurus (Bovine).